The sequence spans 464 residues: MAHVRHFRTLLSGFYFWEAALLLSLVATKETNSARSRSAPMSPSDFLDKLMGRTSGYDARIRPNFKGPPVNVTCNIFINSFGSIAETTMDYRVNIFLRQKWNDPRLAYSEYPDDSLDLDPSMLDSIWKPDLFFANEKGANFHEVTTDNKLLRIFKNGNVLYSIRLTLTLSCPMDLKNFPMDVQTCIMQLESFGYTMNDLIFEWQDEAPVQVAEGLTLPQFLLKEEKDLRYCTKHYNTGKFTCIEVRFHLERQMGYYLIQMYIPSLLIVILSWVSFWINMDAAPARVALGITTVLTMTTQSSGSRASLPKVSYVKAIDIWMAVCLLFVFSALLEYAAVNFVSRQHKELLRFRRKRKNKTEAFALEKFYRFSDTDDEVRESRLSFTAYGMGPCLQAKDGVVPKGPNHAVQVMPKSADEMRKVFIDRAKKIDTISRACFPLAFLIFNIFYWVIYKILRHEDIHHQQD.

Residues 1–33 (MAHVRHFRTLLSGFYFWEAALLLSLVATKETNS) form the signal peptide. Residues 34 to 255 (ARSRSAPMSP…RFHLERQMGY (222 aa)) lie on the Extracellular side of the membrane. N-linked (GlcNAc...) asparagine glycosylation occurs at N71. The cysteines at positions 171 and 185 are disulfide-linked. Zn(2+) is bound by residues E225 and D227. The cysteines at positions 231 and 242 are disulfide-linked. 235–240 (YNTGKF) contacts strychnine. H248 provides a ligand contact to Zn(2+). Residues 256–277 (YLIQMYIPSLLIVILSWVSFWI) traverse the membrane as a helical segment. Over 278-282 (NMDAA) the chain is Cytoplasmic. A helical membrane pass occupies residues 283-303 (PARVALGITTVLTMTTQSSGS). Over 304-314 (RASLPKVSYVK) the chain is Extracellular. A helical transmembrane segment spans residues 315 to 335 (AIDIWMAVCLLFVFSALLEYA). At 336-430 (AVNFVSRQHK…FIDRAKKIDT (95 aa)) the chain is on the cytoplasmic side. Phosphoserine is present on S370. S379 is modified (phosphoserine; by PKA). The helical transmembrane segment at 431 to 451 (ISRACFPLAFLIFNIFYWVIY) threads the bilayer. Over 452–464 (KILRHEDIHHQQD) the chain is Extracellular.

It belongs to the ligand-gated ion channel (TC 1.A.9) family. Glycine receptor (TC 1.A.9.3) subfamily. GLRA3 sub-subfamily. As to quaternary structure, homopentamer (in vitro). Heteropentamer composed of GLRA3 and GLRB. Both homopentamers and heteropentamers form functional ion channels, but their characteristics are subtly different. Phosphorylated by PKA; this causes down-regulation of channel activity.

Its subcellular location is the postsynaptic cell membrane. The protein localises to the perikaryon. It is found in the cell projection. It localises to the dendrite. The protein resides in the synapse. Its subcellular location is the cell membrane. The enzyme catalyses chloride(in) = chloride(out). Its activity is regulated as follows. Low levels of Zn(2+) ions (1 uM) increase glycine sensitivity and decrease the glycine concentration required for half-maximal channel activity. Channel activity is strongly enhanced by ethanol. Inhibited by picrotoxin. Inhibited by prostaglandin E2, probably via PKA-mediated phosphorylation at Ser-379. Functionally, glycine receptors are ligand-gated chloride channels. Channel opening is triggered by extracellular glycine. Channel characteristics depend on the subunit composition; heteropentameric channels display faster channel closure. Plays an important role in the down-regulation of neuronal excitability. Contributes to the generation of inhibitory postsynaptic currents. Contributes to increased pain perception in response to increased prostaglandin E2 levels. Plays a role in cellular responses to ethanol. This chain is Glycine receptor subunit alpha-3 (Glra3), found in Rattus norvegicus (Rat).